The following is a 213-amino-acid chain: Uracil phosphoribosyltransferase (213 aa).

Residues Arg78, Arg103, and 131–139 (DPMLATGGT) contribute to the 5-phospho-alpha-D-ribose 1-diphosphate site. Residues Ile197 and 202 to 204 (GDA) contribute to the uracil site. Residue Asp203 participates in 5-phospho-alpha-D-ribose 1-diphosphate binding.

It belongs to the UPRTase family. The cofactor is Mg(2+).

It carries out the reaction UMP + diphosphate = 5-phospho-alpha-D-ribose 1-diphosphate + uracil. The protein operates within pyrimidine metabolism; UMP biosynthesis via salvage pathway; UMP from uracil: step 1/1. With respect to regulation, allosterically activated by GTP. Functionally, catalyzes the conversion of uracil and 5-phospho-alpha-D-ribose 1-diphosphate (PRPP) to UMP and diphosphate. The polypeptide is Uracil phosphoribosyltransferase (Bifidobacterium animalis subsp. lactis (strain AD011)).